The sequence spans 572 residues: MAFNFNWSPLMADASFYTRAQDLLTAALNKSPKPPIIVDDIIVTELNLGSIPPELEILEIGDLAEDRFRGIFKMSYSGDAFLTLKTRVQANPLNTYLLTRPSFATPRPLAAATPLTIPLQITLSDFKLSGFVILVFSKQKGITVVFRNDPLESLKVSSTFDSIPFVRDFLQKEIEAQLRILFMDELPAIIHRLSLRLWVPEYRAGEELQTQTASANGEGPGQDPLASPPQDPVDALGNALNESEIESLSLDSSVETHSLFSQKNLLRLAALTDSQRTLSLFTPSIREVVYRAWTSPSDQTDASGSVTSPFFPVLSRTQSQVGSMSSFPDSASMVSSQSRSSTPSHTFSGYGLSLGAGRHSKAHARKRKKRVVDLRRPKTTDDAPSVSDESSFTESTSAPSICSAPLPVLDEQTDDPVTPPLSPDNDLHLPAIPERHRMSISRPALRRENASEMIRDTAECKPSSNAVGQAIQEEDLSATPRAAVRAHGASVLEKGKQDPDSSAGSSRQLPSTILPFINDNPTGGVVDQALVERLAGEIARRMRDEKFMASNACGPFWDRHSQEESPPPAYGH.

The 195-residue stretch at 1 to 195 (MAFNFNWSPL…LPAIIHRLSL (195 aa)) folds into the SMP-LTD domain. Disordered regions lie at residues 212-236 (TASA…VDAL), 321-426 (VGSM…PDND), 477-522 (SATP…DNPT), and 553-572 (CGPF…AYGH). Residues 330–348 (SASMVSSQSRSSTPSHTFS) show a composition bias toward low complexity. The span at 358-370 (RHSKAHARKRKKR) shows a compositional bias: basic residues. A compositionally biased stretch (basic and acidic residues) spans 371–381 (VVDLRRPKTTD). Polar residues-rich tracts occupy residues 387 to 400 (SDES…SAPS) and 500 to 511 (DSSAGSSRQLPS).

The protein belongs to the MDM34 family. As to quaternary structure, component of the ER-mitochondria encounter structure (ERMES) or MDM complex, composed of mmm1, mdm10, mdm12 and mdm34.

It localises to the mitochondrion outer membrane. Functionally, component of the ERMES/MDM complex, which serves as a molecular tether to connect the endoplasmic reticulum (ER) and mitochondria. Components of this complex are involved in the control of mitochondrial shape and protein biogenesis, and function in nonvesicular lipid trafficking between the ER and mitochondria. Mdm34 is required for the interaction of the ER-resident membrane protein mmm1 and the outer mitochondrial membrane-resident beta-barrel protein mdm10. The polypeptide is Mitochondrial distribution and morphology protein 34 (Aspergillus fumigatus (strain CBS 144.89 / FGSC A1163 / CEA10) (Neosartorya fumigata)).